We begin with the raw amino-acid sequence, 163 residues long: Nucleotide-binding protein BBR47_25280 (163 aa).

The protein belongs to the YajQ family.

Its function is as follows. Nucleotide-binding protein. The sequence is that of Nucleotide-binding protein BBR47_25280 from Brevibacillus brevis (strain 47 / JCM 6285 / NBRC 100599).